A 753-amino-acid polypeptide reads, in one-letter code: 5-methyltetrahydropteroyltriglutamate--homocysteine methyltransferase (753 aa).

Residues 17–20 (RELK) and K117 contribute to the 5-methyltetrahydropteroyltri-L-glutamate site. L-homocysteine is bound by residues 431–433 (IGS) and E484. L-methionine contacts are provided by residues 431–433 (IGS) and E484. Residues 515–516 (RC) and W561 each bind 5-methyltetrahydropteroyltri-L-glutamate. L-homocysteine is bound at residue D599. D599 is an L-methionine binding site. E605 is a binding site for 5-methyltetrahydropteroyltri-L-glutamate. Residues H641, C643, and E665 each contribute to the Zn(2+) site. H694 serves as the catalytic Proton donor. C726 lines the Zn(2+) pocket.

Belongs to the vitamin-B12 independent methionine synthase family. Zn(2+) serves as cofactor.

It carries out the reaction 5-methyltetrahydropteroyltri-L-glutamate + L-homocysteine = tetrahydropteroyltri-L-glutamate + L-methionine. It participates in amino-acid biosynthesis; L-methionine biosynthesis via de novo pathway; L-methionine from L-homocysteine (MetE route): step 1/1. In terms of biological role, catalyzes the transfer of a methyl group from 5-methyltetrahydrofolate to homocysteine resulting in methionine formation. The protein is 5-methyltetrahydropteroyltriglutamate--homocysteine methyltransferase of Cronobacter sakazakii (strain ATCC BAA-894) (Enterobacter sakazakii).